A 648-amino-acid chain; its full sequence is DNA ligase (648 aa).

Residues 63 to 67 (DILYD) and 105 to 106 (ST) each bind NAD(+). Catalysis depends on lysine 143, which acts as the N6-AMP-lysine intermediate. NAD(+) is bound by residues arginine 159, glutamate 190, and lysine 302. The Zn(2+) site is built by cysteine 390, cysteine 393, cysteine 406, and cysteine 412. The region spanning 570–648 (SLASPLTGKI…SEQEYLDLIS (79 aa)) is the BRCT domain.

The protein belongs to the NAD-dependent DNA ligase family. LigA subfamily. It depends on Mg(2+) as a cofactor. Mn(2+) serves as cofactor.

It catalyses the reaction NAD(+) + (deoxyribonucleotide)n-3'-hydroxyl + 5'-phospho-(deoxyribonucleotide)m = (deoxyribonucleotide)n+m + AMP + beta-nicotinamide D-nucleotide.. Functionally, DNA ligase that catalyzes the formation of phosphodiester linkages between 5'-phosphoryl and 3'-hydroxyl groups in double-stranded DNA using NAD as a coenzyme and as the energy source for the reaction. It is essential for DNA replication and repair of damaged DNA. The protein is DNA ligase of Shewanella baltica (strain OS155 / ATCC BAA-1091).